We begin with the raw amino-acid sequence, 156 residues long: Transcription elongation factor GreA (156 aa).

Residues 46 to 73 (AEYHAAREKQSFIEGRIKELEALLSLAE) adopt a coiled-coil conformation.

The protein belongs to the GreA/GreB family.

Necessary for efficient RNA polymerase transcription elongation past template-encoded arresting sites. The arresting sites in DNA have the property of trapping a certain fraction of elongating RNA polymerases that pass through, resulting in locked ternary complexes. Cleavage of the nascent transcript by cleavage factors such as GreA or GreB allows the resumption of elongation from the new 3'terminus. GreA releases sequences of 2 to 3 nucleotides. The sequence is that of Transcription elongation factor GreA from Cereibacter sphaeroides (strain ATCC 17025 / ATH 2.4.3) (Rhodobacter sphaeroides).